A 45-amino-acid polypeptide reads, in one-letter code: Photosystem II reaction center protein K (45 aa).

Residues 1 to 8 constitute a propeptide that is removed on maturation; sequence MNSALFLA. A helical membrane pass occupies residues 23 to 43; sequence ILPVIPVFFLLLAFVWQAAIG.

Belongs to the PsbK family. In terms of assembly, PSII is composed of 1 copy each of membrane proteins PsbA, PsbB, PsbC, PsbD, PsbE, PsbF, PsbH, PsbI, PsbJ, PsbK, PsbL, PsbM, PsbT, PsbX, PsbY, PsbZ, Psb30/Ycf12, at least 3 peripheral proteins of the oxygen-evolving complex and a large number of cofactors. It forms dimeric complexes.

Its subcellular location is the plastid. It is found in the chloroplast thylakoid membrane. Functionally, one of the components of the core complex of photosystem II (PSII). PSII is a light-driven water:plastoquinone oxidoreductase that uses light energy to abstract electrons from H(2)O, generating O(2) and a proton gradient subsequently used for ATP formation. It consists of a core antenna complex that captures photons, and an electron transfer chain that converts photonic excitation into a charge separation. The chain is Photosystem II reaction center protein K from Porphyra purpurea (Red seaweed).